Reading from the N-terminus, the 126-residue chain is Protein ApaG (126 aa).

Residues 2–126 (SALDTSIRVE…FRLATPGLLH (125 aa)) form the ApaG domain.

The polypeptide is Protein ApaG (Shewanella sp. (strain W3-18-1)).